The primary structure comprises 694 residues: Elongation factor G (694 aa).

The tr-type G domain occupies 9–288 (SKIRNIGIMA…VIVKWLPSPK (280 aa)). GTP is bound by residues 18 to 25 (AHIDAGKT), 82 to 86 (DTPGH), and 136 to 139 (NKMD).

It belongs to the TRAFAC class translation factor GTPase superfamily. Classic translation factor GTPase family. EF-G/EF-2 subfamily.

The protein localises to the cytoplasm. Functionally, catalyzes the GTP-dependent ribosomal translocation step during translation elongation. During this step, the ribosome changes from the pre-translocational (PRE) to the post-translocational (POST) state as the newly formed A-site-bound peptidyl-tRNA and P-site-bound deacylated tRNA move to the P and E sites, respectively. Catalyzes the coordinated movement of the two tRNA molecules, the mRNA and conformational changes in the ribosome. The sequence is that of Elongation factor G from Chlamydia felis (strain Fe/C-56) (Chlamydophila felis).